We begin with the raw amino-acid sequence, 202 residues long: tRNA (pseudouridine(54)-N(1))-methyltransferase (202 aa).

S-adenosyl-L-methionine-binding residues include Leu130, Gly152, and Cys185.

The protein belongs to the methyltransferase superfamily. TrmY family. Homodimer.

It localises to the cytoplasm. It carries out the reaction pseudouridine(54) in tRNA + S-adenosyl-L-methionine = N(1)-methylpseudouridine(54) in tRNA + S-adenosyl-L-homocysteine + H(+). Its function is as follows. Specifically catalyzes the N1-methylation of pseudouridine at position 54 (Psi54) in tRNAs. The polypeptide is tRNA (pseudouridine(54)-N(1))-methyltransferase (Methanococcoides burtonii (strain DSM 6242 / NBRC 107633 / OCM 468 / ACE-M)).